The sequence spans 718 residues: Peroxisomal bifunctional enzyme (718 aa).

Positions 2–280 are enoyl-CoA hydratase / isomerase; it reads ARYELVKRSV…FAQRTAEKWT (279 aa). Residue G100 participates in substrate binding. Residues 281 to 567 form a 3-hydroxyacyl-CoA dehydrogenase region; the sequence is LPSGAQWNNS…DMVCQQGRFG (287 aa). Positions 716–718 match the Microbody targeting signal motif; that stretch reads SHL.

It in the N-terminal section; belongs to the enoyl-CoA hydratase/isomerase family. This sequence in the C-terminal section; belongs to the 3-hydroxyacyl-CoA dehydrogenase family. Monomer.

It localises to the peroxisome. The catalysed reaction is a (3S)-3-hydroxyacyl-CoA = a (2E)-enoyl-CoA + H2O. It carries out the reaction a 4-saturated-(3S)-3-hydroxyacyl-CoA = a (3E)-enoyl-CoA + H2O. It catalyses the reaction a (3Z)-enoyl-CoA = a 4-saturated (2E)-enoyl-CoA. The enzyme catalyses a (3E)-enoyl-CoA = a 4-saturated (2E)-enoyl-CoA. The catalysed reaction is a (3S)-3-hydroxyacyl-CoA + NAD(+) = a 3-oxoacyl-CoA + NADH + H(+). It carries out the reaction (2S,3S)-3-hydroxy-2-methylbutanoyl-CoA = (2E)-2-methylbut-2-enoyl-CoA + H2O. It catalyses the reaction (3S)-hydroxyhexadecanoyl-CoA + NAD(+) = 3-oxohexadecanoyl-CoA + NADH + H(+). The enzyme catalyses (3S)-hydroxyhexadecanoyl-CoA = (2E)-hexadecenoyl-CoA + H2O. The catalysed reaction is (2E)-hexadecenedioyl-CoA + H2O = (3S)-hydroxyhexadecanedioyl-CoA. It carries out the reaction (3S)-hydroxyhexadecanedioyl-CoA + NAD(+) = 3-oxohexadecanedioyl-CoA + NADH + H(+). It catalyses the reaction (3E,5Z)-tetradecadienoyl-CoA = (2E,5Z)-tetradecadienoyl-CoA. The enzyme catalyses (3E,5Z)-octadienoyl-CoA = (2E,5Z)-octadienoyl-CoA. The catalysed reaction is (3S)-hydroxydecanoyl-CoA + NAD(+) = 3-oxodecanoyl-CoA + NADH + H(+). It carries out the reaction (3E)-decenoyl-CoA = (2E)-decenoyl-CoA. It catalyses the reaction (3Z)-hexenoyl-CoA = (2E)-hexenoyl-CoA. The enzyme catalyses (3E)-hexenoyl-CoA = (2E)-hexenoyl-CoA. The catalysed reaction is (3S)-hydroxydecanoyl-CoA = (2E)-decenoyl-CoA + H2O. It carries out the reaction (3S)-hydroxyhexanoyl-CoA = (2E)-hexenoyl-CoA + H2O. Its pathway is lipid metabolism; fatty acid beta-oxidation. Functionally, peroxisomal trifunctional enzyme possessing 2-enoyl-CoA hydratase, 3-hydroxyacyl-CoA dehydrogenase, and delta 3, delta 2-enoyl-CoA isomerase activities. Catalyzes two of the four reactions of the long straight chain fatty acids peroxisomal beta-oxidation pathway. Can also use branched-chain fatty acids such as 2-methyl-2E-butenoyl-CoA as a substrate, which is hydrated into (2S,3S)-3-hydroxy-2-methylbutanoyl-CoA. Optimal isomerase for 2,5 double bonds into 3,5 form isomerization in a range of enoyl-CoA species. Also able to isomerize both 3-cis and 3-trans double bonds into the 2-trans form in a range of enoyl-CoA species. Regulates the amount of medium-chain dicarboxylic fatty acids which are essential regulators of all fatty acid oxidation pathways. Also involved in the degradation of long-chain dicarboxylic acids through peroxisomal beta-oxidation. The protein is Peroxisomal bifunctional enzyme (ehhadh) of Danio rerio (Zebrafish).